We begin with the raw amino-acid sequence, 238 residues long: Ribonuclease PH (238 aa).

Phosphate-binding positions include R86 and 124–126 (GTR).

Belongs to the RNase PH family. Homohexameric ring arranged as a trimer of dimers.

It carries out the reaction tRNA(n+1) + phosphate = tRNA(n) + a ribonucleoside 5'-diphosphate. In terms of biological role, phosphorolytic 3'-5' exoribonuclease that plays an important role in tRNA 3'-end maturation. Removes nucleotide residues following the 3'-CCA terminus of tRNAs; can also add nucleotides to the ends of RNA molecules by using nucleoside diphosphates as substrates, but this may not be physiologically important. Probably plays a role in initiation of 16S rRNA degradation (leading to ribosome degradation) during starvation. The protein is Ribonuclease PH of Dichelobacter nodosus (strain VCS1703A).